The sequence spans 199 residues: 7-methyl-GTP pyrophosphatase (199 aa).

The active-site Proton acceptor is the Asp74.

The protein belongs to the Maf family. YceF subfamily. The cofactor is a divalent metal cation.

The protein localises to the cytoplasm. It catalyses the reaction N(7)-methyl-GTP + H2O = N(7)-methyl-GMP + diphosphate + H(+). In terms of biological role, nucleoside triphosphate pyrophosphatase that hydrolyzes 7-methyl-GTP (m(7)GTP). May have a dual role in cell division arrest and in preventing the incorporation of modified nucleotides into cellular nucleic acids. This chain is 7-methyl-GTP pyrophosphatase, found in Albidiferax ferrireducens (strain ATCC BAA-621 / DSM 15236 / T118) (Rhodoferax ferrireducens).